Here is a 57-residue protein sequence, read N- to C-terminus: Ribulose bisphosphate carboxylase large chain (57 aa).

Residues 1-2 (MS) constitute a propeptide that is removed on maturation. Pro-3 is subject to N-acetylproline. N6,N6,N6-trimethyllysine is present on Lys-14.

Belongs to the RuBisCO large chain family. Type I subfamily. Heterohexadecamer of 8 large chains and 8 small chains.

It is found in the plastid. The protein localises to the chloroplast. The enzyme catalyses 2 (2R)-3-phosphoglycerate + 2 H(+) = D-ribulose 1,5-bisphosphate + CO2 + H2O. It catalyses the reaction D-ribulose 1,5-bisphosphate + O2 = 2-phosphoglycolate + (2R)-3-phosphoglycerate + 2 H(+). Its function is as follows. RuBisCO catalyzes two reactions: the carboxylation of D-ribulose 1,5-bisphosphate, the primary event in carbon dioxide fixation, as well as the oxidative fragmentation of the pentose substrate in the photorespiration process. Both reactions occur simultaneously and in competition at the same active site. In Camellia sinensis (Tea plant), this protein is Ribulose bisphosphate carboxylase large chain (rbcL).